The primary structure comprises 334 residues: HTH-type transcriptional repressor PurR (334 aa).

Residues 2 to 56 enclose the HTH lacI-type domain; that stretch reads ATIKDVARMAGVSTTTVSHVINKTRFVAEATQKKVLAAVDDLNYAPSAVARSLKC. A DNA-binding region (H-T-H motif) is located at residues 4 to 23; that stretch reads IKDVARMAGVSTTTVSHVIN. Residues 48–56 mediate DNA binding; sequence SAVARSLKC. Hypoxanthine-binding residues include Phe73, Lys189, Thr191, Phe220, and Asp274.

In terms of assembly, homodimer.

It participates in purine metabolism; purine nucleotide biosynthesis [regulation]. Its function is as follows. Is the main repressor of the genes involved in the de novo synthesis of purine nucleotides, regulating purB, purC, purEK, purF, purHD, purL, purMN and guaBA expression. PurR is allosterically activated to bind its cognate DNA by binding the purine corepressors, hypoxanthine or guanine, thereby effecting transcription repression. The chain is HTH-type transcriptional repressor PurR from Photobacterium profundum (strain SS9).